Reading from the N-terminus, the 211-residue chain is Neuroendocrine protein 7B2 (211 aa).

An N-terminal signal peptide occupies residues 1 to 26; that stretch reads MVSRMVSTMLSGLLFWLASGWTPAFA. Residues 106–132 form a disordered region; the sequence is DFSEDQGYPDPPNPCPVGKTDDGCLEN. A disulfide bridge links Cys-120 with Cys-129. Ser-140 and Ser-204 each carry phosphoserine. A disordered region spans residues 173–211; the sequence is GGERRKRRSVNPYLQGQRLDNVVAKKSVPHFSDEDKDPE.

Belongs to the 7B2 family. In terms of assembly, interacts with PCSK2/PC2 early in the secretory pathway. Dissociation occurs at later stages. In terms of processing, proteolytically cleaved in the Golgi by a furin-like convertase to generate bioactive peptides. Post-translationally, sulfated on tyrosine residues.

The protein localises to the secreted. Its function is as follows. Acts as a molecular chaperone for PCSK2/PC2, preventing its premature activation in the regulated secretory pathway. Binds to inactive PCSK2 in the endoplasmic reticulum and facilitates its transport from there to later compartments of the secretory pathway where it is proteolytically matured and activated. Also required for cleavage of PCSK2 but does not appear to be involved in its folding. Plays a role in regulating pituitary hormone secretion. The C-terminal peptide inhibits PCSK2 in vitro. The polypeptide is Neuroendocrine protein 7B2 (SCG5) (Pan troglodytes (Chimpanzee)).